The sequence spans 149 residues: Endoribonuclease YbeY (149 aa).

Positions 112, 116, and 122 each coordinate Zn(2+).

This sequence belongs to the endoribonuclease YbeY family. Requires Zn(2+) as cofactor.

It is found in the cytoplasm. In terms of biological role, single strand-specific metallo-endoribonuclease involved in late-stage 70S ribosome quality control and in maturation of the 3' terminus of the 16S rRNA. The chain is Endoribonuclease YbeY from Methylibium petroleiphilum (strain ATCC BAA-1232 / LMG 22953 / PM1).